A 601-amino-acid polypeptide reads, in one-letter code: Terpenoid synthase 17 (601 aa).

Mg(2+) is bound by residues Asn354, Asp358, Asn497, Thr501, and Glu505. A DDXXD motif; degenerate motif is present at residues 354-358; it reads NDTCD.

This sequence belongs to the terpene synthase family. Tpsa subfamily. The cofactor is Mg(2+). Requires Mn(2+) as cofactor. Expressed exclusively in flowers.

It localises to the cytoplasm. Its pathway is secondary metabolite biosynthesis; terpenoid biosynthesis. This is Terpenoid synthase 17 (TPS17) from Arabidopsis thaliana (Mouse-ear cress).